The sequence spans 215 residues: L-fuculose phosphate aldolase (215 aa).

Residues 28–29 (GN), 43–44 (TG), and 71–72 (SS) each bind substrate. The active-site Proton donor/acceptor is the Glu-73. Residues Glu-73, His-92, His-94, and His-155 each coordinate Zn(2+).

This sequence belongs to the aldolase class II family. AraD/FucA subfamily. In terms of assembly, homotetramer. Zn(2+) serves as cofactor.

The enzyme catalyses L-fuculose 1-phosphate = (S)-lactaldehyde + dihydroxyacetone phosphate. Its pathway is carbohydrate degradation; L-fucose degradation; L-lactaldehyde and glycerone phosphate from L-fucose: step 3/3. Its function is as follows. Involved in the degradation of L-fucose and D-arabinose. Catalyzes the reversible cleavage of L-fuculose 1-phosphate (Fuc1P) to yield dihydroxyacetone phosphate (DHAP) and L-lactaldehyde. The chain is L-fuculose phosphate aldolase from Escherichia coli O6:H1 (strain CFT073 / ATCC 700928 / UPEC).